The sequence spans 346 residues: Peroxidase 19 (346 aa).

The first 31 residues, 1-31, serve as a signal peptide directing secretion; it reads MHVISLSLSSIFFFLFLTSTILISPVQPTTS. 4 disulfides stabilise this stretch: Cys-51–Cys-134, Cys-84–Cys-89, Cys-140–Cys-342, and Cys-219–Cys-251. His-82 serves as the catalytic Proton acceptor. Residues Asp-83, Val-86, Gly-88, Asp-90, and Ser-92 each contribute to the Ca(2+) site. Residue Pro-182 participates in substrate binding. Asn-185 carries N-linked (GlcNAc...) asparagine glycosylation. Position 212 (His-212) interacts with heme b. Thr-213 contributes to the Ca(2+) binding site. Ca(2+) is bound by residues Asp-265, Thr-268, and Asp-273.

The protein belongs to the peroxidase family. Classical plant (class III) peroxidase subfamily. Requires heme b as cofactor. Ca(2+) is required as a cofactor.

It is found in the secreted. It carries out the reaction 2 a phenolic donor + H2O2 = 2 a phenolic radical donor + 2 H2O. Its function is as follows. Removal of H(2)O(2), oxidation of toxic reductants, biosynthesis and degradation of lignin, suberization, auxin catabolism, response to environmental stresses such as wounding, pathogen attack and oxidative stress. These functions might be dependent on each isozyme/isoform in each plant tissue. The chain is Peroxidase 19 (PER19) from Arabidopsis thaliana (Mouse-ear cress).